The following is a 93-amino-acid chain: MITKDEVEHVGWLARIEIGAAEAEDYAVKLSSVLDYFGQLDEVDTEGVEPTYHVADIMNVFREDVVKPSLDQKDVLANTAEEKDGYIKAPRII.

Belongs to the GatC family. Heterotrimer of A, B and C subunits.

The catalysed reaction is L-glutamyl-tRNA(Gln) + L-glutamine + ATP + H2O = L-glutaminyl-tRNA(Gln) + L-glutamate + ADP + phosphate + H(+). It carries out the reaction L-aspartyl-tRNA(Asn) + L-glutamine + ATP + H2O = L-asparaginyl-tRNA(Asn) + L-glutamate + ADP + phosphate + 2 H(+). Its function is as follows. Allows the formation of correctly charged Asn-tRNA(Asn) or Gln-tRNA(Gln) through the transamidation of misacylated Asp-tRNA(Asn) or Glu-tRNA(Gln) in organisms which lack either or both of asparaginyl-tRNA or glutaminyl-tRNA synthetases. The reaction takes place in the presence of glutamine and ATP through an activated phospho-Asp-tRNA(Asn) or phospho-Glu-tRNA(Gln). In Methanococcoides burtonii (strain DSM 6242 / NBRC 107633 / OCM 468 / ACE-M), this protein is Aspartyl/glutamyl-tRNA(Asn/Gln) amidotransferase subunit C.